Here is a 122-residue protein sequence, read N- to C-terminus: MIQTQSIVDVADNSGARRVMCIKVLGGSKRRYANIGDVIKVSIKEAIPRGKVKKGDVMHAVVVRTRKGVRRNDGSLIRFDNNAVVLLNNQLQLVGTRVFGPVVRELRTDKFMKIISLALEVL.

The protein belongs to the universal ribosomal protein uL14 family. Part of the 50S ribosomal subunit. Forms a cluster with proteins L3 and L19. In the 70S ribosome, L14 and L19 interact and together make contacts with the 16S rRNA in bridges B5 and B8.

Its function is as follows. Binds to 23S rRNA. Forms part of two intersubunit bridges in the 70S ribosome. In Coxiella burnetii (strain RSA 331 / Henzerling II), this protein is Large ribosomal subunit protein uL14.